Reading from the N-terminus, the 215-residue chain is 3-isopropylmalate dehydratase small subunit (215 aa).

The protein belongs to the LeuD family. LeuD type 1 subfamily. In terms of assembly, heterodimer of LeuC and LeuD.

It catalyses the reaction (2R,3S)-3-isopropylmalate = (2S)-2-isopropylmalate. It functions in the pathway amino-acid biosynthesis; L-leucine biosynthesis; L-leucine from 3-methyl-2-oxobutanoate: step 2/4. Catalyzes the isomerization between 2-isopropylmalate and 3-isopropylmalate, via the formation of 2-isopropylmaleate. This chain is 3-isopropylmalate dehydratase small subunit, found in Xylella fastidiosa (strain M12).